The following is a 189-amino-acid chain: Parkinson disease protein 7 homolog (189 aa).

The residue at position 2 (Ala-2) is an N-acetylalanine. 2 S-palmitoyl cysteine lipidation sites follow: Cys-46 and Cys-53. Tyr-67 carries the phosphotyrosine modification. Cys-106 serves as the catalytic Nucleophile. Cys-106 is subject to Cysteine sulfinic acid (-SO2H); alternate. Cys-106 is lipidated: S-palmitoyl cysteine; alternate. Residue His-126 is part of the active site. A Glycyl lysine isopeptide (Lys-Gly) (interchain with G-Cter in SUMO) cross-link involves residue Lys-130. N6-acetyllysine is present on Lys-148. The residue at position 182 (Lys-182) is an N6-succinyllysine.

Belongs to the peptidase C56 family. As to quaternary structure, homodimer. Binds EFCAB6/DJBP and PIAS2. Part of a ternary complex containing PARK7, EFCAB6/DJBP and AR. Binds to HIPK1. Interacts (via N-terminus) with OTUD7B. Interacts with BBS1, CLCF1 and MTERF. Interacts (via C-terminus) with NCF1; the interaction is enhanced by LPS and modulates NCF1 phosphorylation and membrane translocation. Interacts with NENF. Deglycase activity does not require glutathione as a cofactor, however, glycated glutathione constitutes a PARK7 substrate. is required as a cofactor. In terms of processing, sumoylated on Lys-130 by PIAS2 or PIAS4; which is essential for cell-growth promoting activity and transforming activity. Post-translationally, undergoes cleavage of a C-terminal peptide and subsequent activation of protease activity in response to oxidative stress. As to expression, expressed in erythroblasts and in mature red blood cells from peripheral blood (at protein level). In pancreas, expression is higher in islets than surrounding exocrine tissues.

Its subcellular location is the cell membrane. It is found in the cytoplasm. It localises to the membrane raft. The protein resides in the nucleus. The protein localises to the mitochondrion. Its subcellular location is the endoplasmic reticulum. It carries out the reaction N(omega)-(1-hydroxy-2-oxopropyl)-L-arginyl-[protein] + H2O = lactate + L-arginyl-[protein] + H(+). The catalysed reaction is N(6)-(1-hydroxy-2-oxopropyl)-L-lysyl-[protein] + H2O = lactate + L-lysyl-[protein] + H(+). It catalyses the reaction S-(1-hydroxy-2-oxopropyl)-L-cysteinyl-[protein] + H2O = lactate + L-cysteinyl-[protein] + H(+). The enzyme catalyses N(omega)-(1-hydroxy-2-oxoethyl)-L-arginyl-[protein] + H2O = L-arginyl-[protein] + glycolate + H(+). It carries out the reaction N(6)-(1-hydroxy-2-oxoethyl)-L-lysyl-[protein] + H2O = glycolate + L-lysyl-[protein] + H(+). The catalysed reaction is S-(1-hydroxy-2-oxoethyl)-L-cysteinyl-[protein] + H2O = glycolate + L-cysteinyl-[protein] + H(+). It catalyses the reaction N(2)-(1-hydroxy-2-oxopropyl)-dGTP + H2O = lactate + dGTP + H(+). The enzyme catalyses N(2)-(1-hydroxy-2-oxopropyl)-GTP + H2O = lactate + GTP + H(+). It carries out the reaction N(2)-(1-hydroxy-2-oxopropyl)-GDP + H2O = lactate + GDP + H(+). The catalysed reaction is N(2)-(1-hydroxy-2-oxopropyl)-GMP + H2O = lactate + GMP + H(+). It catalyses the reaction N(2)-(1-hydroxy-2-oxoethyl)-dGTP + H2O = dGTP + glycolate + H(+). The enzyme catalyses N(2)-(1-hydroxy-2-oxoethyl)-GTP + H2O = glycolate + GTP + H(+). It carries out the reaction N(2)-(1-hydroxy-2-oxoethyl)-GDP + H2O = glycolate + GDP + H(+). The catalysed reaction is N(2)-(1-hydroxy-2-oxoethyl)-GMP + H2O = glycolate + GMP + H(+). It catalyses the reaction an N(2)-(1-hydroxy-2-oxopropyl)-guanosine in RNA + H2O = a guanosine in RNA + lactate + H(+). The enzyme catalyses an N(2)-(1-hydroxy-2-oxopropyl)-2'-deoxyguanosine in DNA + H2O = a 2'-deoxyguanosine in DNA + lactate + H(+). It carries out the reaction an N(2)-(1-hydroxy-2-oxoethyl)-guanosine in RNA + H2O = a guanosine in RNA + glycolate + H(+). The catalysed reaction is an N(2)-(1-hydroxy-2-oxoethyl)-2'-deoxyguanosine in DNA + H2O = a 2'-deoxyguanosine in DNA + glycolate + H(+). Multifunctional protein with controversial molecular function which plays an important role in cell protection against oxidative stress and cell death acting as oxidative stress sensor and redox-sensitive chaperone and protease. It is involved in neuroprotective mechanisms like the stabilization of NFE2L2 and PINK1 proteins, male fertility as a positive regulator of androgen signaling pathway as well as cell growth and transformation through, for instance, the modulation of NF-kappa-B signaling pathway. Has been described as a protein and nucleotide deglycase that catalyzes the deglycation of the Maillard adducts formed between amino groups of proteins or nucleotides and reactive carbonyl groups of glyoxals. But this function is rebuted by other works. As a protein deglycase, repairs methylglyoxal- and glyoxal-glycated proteins, and releases repaired proteins and lactate or glycolate, respectively. Deglycates cysteine, arginine and lysine residues in proteins, and thus reactivates these proteins by reversing glycation by glyoxals. Acts on early glycation intermediates (hemithioacetals and aminocarbinols), preventing the formation of advanced glycation endproducts (AGE) that cause irreversible damage. Also functions as a nucleotide deglycase able to repair glycated guanine in the free nucleotide pool (GTP, GDP, GMP, dGTP) and in DNA and RNA. Is thus involved in a major nucleotide repair system named guanine glycation repair (GG repair), dedicated to reversing methylglyoxal and glyoxal damage via nucleotide sanitization and direct nucleic acid repair. Protects histones from adduction by methylglyoxal, controls the levels of methylglyoxal-derived argininine modifications on chromatin. Able to remove the glycations and restore histone 3, histone glycation disrupts both local and global chromatin architecture by altering histone-DNA interactions as well as histone acetylation and ubiquitination levels. Displays a very low glyoxalase activity that may reflect its deglycase activity. Eliminates hydrogen peroxide and protects cells against hydrogen peroxide-induced cell death. Required for correct mitochondrial morphology and function as well as for autophagy of dysfunctional mitochondria. Plays a role in regulating expression or stability of the mitochondrial uncoupling proteins SLC25A14 and SLC25A27 in dopaminergic neurons of the substantia nigra pars compacta and attenuates the oxidative stress induced by calcium entry into the neurons via L-type channels during pacemaking. Regulates astrocyte inflammatory responses, may modulate lipid rafts-dependent endocytosis in astrocytes and neuronal cells. In pancreatic islets, involved in the maintenance of mitochondrial reactive oxygen species (ROS) levels and glucose homeostasis in an age- and diet dependent manner. Protects pancreatic beta cells from cell death induced by inflammatory and cytotoxic setting. Binds to a number of mRNAs containing multiple copies of GG or CC motifs and partially inhibits their translation but dissociates following oxidative stress. Metal-binding protein able to bind copper as well as toxic mercury ions, enhances the cell protection mechanism against induced metal toxicity. In macrophages, interacts with the NADPH oxidase subunit NCF1 to direct NADPH oxidase-dependent ROS production, and protects against sepsis. This chain is Parkinson disease protein 7 homolog, found in Mus musculus (Mouse).